The primary structure comprises 199 residues: Fe/S biogenesis protein NfuA (199 aa).

The [4Fe-4S] cluster site is built by Cys-151 and Cys-154.

Belongs to the NfuA family. Homodimer. Requires [4Fe-4S] cluster as cofactor.

Its function is as follows. Involved in iron-sulfur cluster biogenesis. Binds a 4Fe-4S cluster, can transfer this cluster to apoproteins, and thereby intervenes in the maturation of Fe/S proteins. Could also act as a scaffold/chaperone for damaged Fe/S proteins. This chain is Fe/S biogenesis protein NfuA, found in Xanthomonas campestris pv. campestris (strain 8004).